A 183-amino-acid polypeptide reads, in one-letter code: PLAT domain-containing protein 2 (183 aa).

The first 25 residues, 1 to 25 (MMPRRDVLFLSLLLVIATVSAVALA), serve as a signal peptide directing secretion. The PLAT domain occupies 31 to 158 (CVYTFFLRTG…SPYELSAVRN (128 aa)).

The protein resides in the endoplasmic reticulum. Its function is as follows. Involved in response to abiotic stress. The chain is PLAT domain-containing protein 2 from Arabidopsis thaliana (Mouse-ear cress).